Here is a 190-residue protein sequence, read N- to C-terminus: MSENNGDNIELLSENDVARTIARIAHQIIEKTALDAPGTKPVLLLGIPSGGVPIASQIAQKIKEFTGVDVPVGSLDVTLYRDDLRKNPHRALQPTNLPLDGINGHHIILVDDVLYSGRTIRAALDALRDIGRPDIIQLAVLVDRGHRQLPIRADYVGKNLPTSRGEDVQVFIKEIDGRTAVVLTRGTEEA.

Positions 107 to 119 (IILVDDVLYSGRT) match the PRPP-binding motif.

This sequence belongs to the purine/pyrimidine phosphoribosyltransferase family. PyrR subfamily.

The catalysed reaction is UMP + diphosphate = 5-phospho-alpha-D-ribose 1-diphosphate + uracil. Functionally, regulates the transcription of the pyrimidine nucleotide (pyr) operon in response to exogenous pyrimidines. In terms of biological role, also displays a weak uracil phosphoribosyltransferase activity which is not physiologically significant. The protein is Bifunctional protein PyrR of Corynebacterium diphtheriae (strain ATCC 700971 / NCTC 13129 / Biotype gravis).